Reading from the N-terminus, the 497-residue chain is MATITLVQQFLGFGQEQEDGGMKTRYLGAMAGSVILLISAFTLSLGRRSKDFTTDQGKRITEIPGDSRMSKFTRSRELSQQGEDAAGTEPYLLQSGPYRELVISQPDQVHDFYQHDSKRHTKPRNLNLGEQFGSFLGPCVGGEYGDHWRTIRKHFEPPFAFHSVALRAPRFRREINDWLQSKAPNLRVNELDSKIDFRFLVFKLLSLHLYEDAFDDRSYWSLLELNDLYDGIITDILNSKYPDSKLFNLFCWSPKKRLREFQVKWRDFHRLVIENARGGGWACPMEVIYRGVDPQKDLTENAFLATMTEILFANVNISAEVFHTIFSNLASNPSIQTALRKEIQEWKSRLDFDLPKYLAKHDTLLNRVLMESMRISPAFWFSMPECTADAKKIGQYNIPAGTPVVIDTRRLNNDAVTWGTTGDVFNPDRFFKLPSQSLRCGFMRYGTGASSGRCLGKNVADAVFKLTMIEVVERFRLESASESQEKGREGDIRLISL.

Residues 26-46 (YLGAMAGSVILLISAFTLSLG) form a helical membrane-spanning segment. The interval 69–90 (MSKFTRSRELSQQGEDAAGTEP) is disordered. Position 454 (Cys-454) interacts with heme.

Heme serves as cofactor.

The protein resides in the membrane. It functions in the pathway secondary metabolite biosynthesis. Cytochrome P450 monooxygenase; part of the gene cluster that mediates the biosynthesis of oxopyrrolidines, polyketide-amino acid hybrid compounds with feature structures of tetramic acid. Does not seem to play a role in oxopyrrolidines A and B biosynthesis. May be involved in further modifications of these oxopyrrolidines. The sequence is that of Cytochrome P450 monooxygenase opdB from Penicillium oxalicum (strain 114-2 / CGMCC 5302) (Penicillium decumbens).